We begin with the raw amino-acid sequence, 314 residues long: DNA-directed RNA polymerase subunit alpha (314 aa).

Residues 1 to 228 (MIEIEKPKIE…EHLNIFVGLT (228 aa)) are alpha N-terminal domain (alpha-NTD). The tract at residues 245-314 (KEKVLEMTIE…ELGLGLRKDD (70 aa)) is alpha C-terminal domain (alpha-CTD).

Belongs to the RNA polymerase alpha chain family. In terms of assembly, homodimer. The RNAP catalytic core consists of 2 alpha, 1 beta, 1 beta' and 1 omega subunit. When a sigma factor is associated with the core the holoenzyme is formed, which can initiate transcription.

It catalyses the reaction RNA(n) + a ribonucleoside 5'-triphosphate = RNA(n+1) + diphosphate. Its function is as follows. DNA-dependent RNA polymerase catalyzes the transcription of DNA into RNA using the four ribonucleoside triphosphates as substrates. The sequence is that of DNA-directed RNA polymerase subunit alpha from Bacillus thuringiensis (strain Al Hakam).